Consider the following 141-residue polypeptide: Acetyltransferase YpeA (141 aa).

In terms of domain architecture, N-acetyltransferase spans methionine 1–tyrosine 141.

The protein belongs to the acetyltransferase family. YpeA subfamily.

The chain is Acetyltransferase YpeA (ypeA) from Escherichia coli (strain K12).